Here is a 379-residue protein sequence, read N- to C-terminus: Lipid-A-disaccharide synthase (379 aa).

Belongs to the LpxB family.

The enzyme catalyses a lipid X + a UDP-2-N,3-O-bis[(3R)-3-hydroxyacyl]-alpha-D-glucosamine = a lipid A disaccharide + UDP + H(+). It participates in bacterial outer membrane biogenesis; LPS lipid A biosynthesis. Its function is as follows. Condensation of UDP-2,3-diacylglucosamine and 2,3-diacylglucosamine-1-phosphate to form lipid A disaccharide, a precursor of lipid A, a phosphorylated glycolipid that anchors the lipopolysaccharide to the outer membrane of the cell. In Pseudomonas fluorescens (strain SBW25), this protein is Lipid-A-disaccharide synthase.